The chain runs to 140 residues: Nucleoside diphosphate kinase (140 aa).

ATP-binding residues include lysine 11, phenylalanine 59, arginine 87, threonine 93, arginine 104, and asparagine 114. Histidine 117 serves as the catalytic Pros-phosphohistidine intermediate.

Belongs to the NDK family. As to quaternary structure, homotetramer. The cofactor is Mg(2+).

It localises to the cytoplasm. It catalyses the reaction a 2'-deoxyribonucleoside 5'-diphosphate + ATP = a 2'-deoxyribonucleoside 5'-triphosphate + ADP. It carries out the reaction a ribonucleoside 5'-diphosphate + ATP = a ribonucleoside 5'-triphosphate + ADP. In terms of biological role, major role in the synthesis of nucleoside triphosphates other than ATP. The ATP gamma phosphate is transferred to the NDP beta phosphate via a ping-pong mechanism, using a phosphorylated active-site intermediate. This is Nucleoside diphosphate kinase from Paracoccus denitrificans (strain Pd 1222).